The primary structure comprises 383 residues: MGRIAKYYREYGIRIVKGFMQYVWDDKGQRYIDCNTNHGVVFLGHANPKIVEAVKKQVEEIWAVPLNFATPARERFIEEFSKLLPPKFGVVFLQNTGTEAVEVAIKIAKKVTRKPTIVAFTNSFHGRTMGSLSITWNEKYKKAFEPLYPHVRFGKFNVPHEVDKLIGEDTCCVVVEPIQGEGGVNPATPEFLKALREEAQRKGALLIFDEVQTGFGRTGAVWAFQKYGVEPDIFTAGKPVAGGLPIGLAVAREDFGDVFEPGEHGSTFAGNAVVMAAAAAASRLLREEDVPGRAERIGAELAKALGDTGSRLAVRVKGMGLMLGLELRVKADQFIQPLLERGVMALTAGVNTLRFLPPYMISKEDVEVVHAAVTEVLKKAEQQ.

Residues 97 to 98 and F124 each bind pyridoxal 5'-phosphate; that span reads GT. A substrate-binding site is contributed by R127. 209 to 212 contributes to the pyridoxal 5'-phosphate binding site; sequence DEVQ. N6-(pyridoxal phosphate)lysine is present on K238. S266 contacts substrate. Residue T267 coordinates pyridoxal 5'-phosphate.

Belongs to the class-III pyridoxal-phosphate-dependent aminotransferase family. LysJ subfamily. In terms of assembly, homodimer. Requires pyridoxal 5'-phosphate as cofactor.

It is found in the cytoplasm. It carries out the reaction [amino-group carrier protein]-C-terminal-gamma-(L-lysyl)-L-glutamate + 2-oxoglutarate = [amino-group carrier protein]-C-terminal-N-(1-carboxy-5-oxopentan-1-yl)-L-glutamine + L-glutamate. The catalysed reaction is [amino-group carrier protein]-C-terminal-gamma-(L-ornithyl)-L-glutamate + 2-oxoglutarate = [amino-group carrier protein]-C-terminal-gamma-(L-glutamyl-5-semialdehyde)-L-glutamate + L-glutamate. It participates in amino-acid biosynthesis; L-lysine biosynthesis via AAA pathway; L-lysine from L-alpha-aminoadipate (Thermus route): step 4/5. The protein operates within amino-acid biosynthesis; L-arginine biosynthesis. Functionally, involved in both the arginine and lysine biosynthetic pathways. The polypeptide is Putative [LysW]-aminoadipate semialdehyde/glutamate semialdehyde transaminase (Pyrobaculum aerophilum (strain ATCC 51768 / DSM 7523 / JCM 9630 / CIP 104966 / NBRC 100827 / IM2)).